The primary structure comprises 101 residues: Chaperone modulatory protein CbpM (101 aa).

It belongs to the CbpM family.

Interacts with CbpA and inhibits both the DnaJ-like co-chaperone activity and the DNA binding activity of CbpA. Together with CbpA, modulates the activity of the DnaK chaperone system. Does not inhibit the co-chaperone activity of DnaJ. The protein is Chaperone modulatory protein CbpM of Pseudomonas putida (strain ATCC 700007 / DSM 6899 / JCM 31910 / BCRC 17059 / LMG 24140 / F1).